Here is a 398-residue protein sequence, read N- to C-terminus: Dual specificity mitogen-activated protein kinase kinase 2 (398 aa).

The tract at residues 1 to 29 (MPAKRKPVLPALTITPSPAEGPGPGGSAE) is disordered. Residues 70 to 367 (FERISELGAG…LKMLMNHTFI (298 aa)) form the Protein kinase domain. Residues 76 to 84 (LGAGNGGVV) and Lys-99 each bind ATP. Asp-192 acts as the Proton acceptor in catalysis. Residues Ser-220 and Ser-224 each carry the phosphoserine; by RAF modification.

This sequence belongs to the protein kinase superfamily. STE Ser/Thr protein kinase family. MAP kinase kinase subfamily. Activated by phosphorylation on Ser/Thr catalyzed by MAP kinase kinase kinases (RAF).

The catalysed reaction is L-seryl-[protein] + ATP = O-phospho-L-seryl-[protein] + ADP + H(+). The enzyme catalyses L-threonyl-[protein] + ATP = O-phospho-L-threonyl-[protein] + ADP + H(+). It carries out the reaction L-tyrosyl-[protein] + ATP = O-phospho-L-tyrosyl-[protein] + ADP + H(+). Its function is as follows. Catalyzes the concomitant phosphorylation of a threonine and a tyrosine residue in a Thr-Glu-Tyr sequence located in MAP kinases. Activates the ERK1 and ERK2 MAP kinases. The sequence is that of Dual specificity mitogen-activated protein kinase kinase 2 (MAP2K2) from Gallus gallus (Chicken).